The primary structure comprises 467 residues: 6-phosphogluconate dehydrogenase, decarboxylating (467 aa).

Residues 9–14, 32–34, 73–75, and asparagine 101 each bind NADP(+); these read GLGVMG, NYT, and VTA. Residues asparagine 101 and 127-129 contribute to the substrate site; that span reads SGG. The active-site Proton acceptor is the lysine 181. Position 184-185 (184-185) interacts with substrate; the sequence is HN. Glutamate 188 serves as the catalytic Proton donor. 4 residues coordinate substrate: tyrosine 189, lysine 259, arginine 286, and histidine 451.

This sequence belongs to the 6-phosphogluconate dehydrogenase family. As to quaternary structure, homodimer.

It catalyses the reaction 6-phospho-D-gluconate + NADP(+) = D-ribulose 5-phosphate + CO2 + NADPH. It functions in the pathway carbohydrate degradation; pentose phosphate pathway; D-ribulose 5-phosphate from D-glucose 6-phosphate (oxidative stage): step 3/3. In terms of biological role, catalyzes the oxidative decarboxylation of 6-phosphogluconate to ribulose 5-phosphate and CO(2), with concomitant reduction of NADP to NADPH. In Bacillus licheniformis, this protein is 6-phosphogluconate dehydrogenase, decarboxylating (gntZ).